The chain runs to 81 residues: MAFLKKSLFLVLFLGLVSLSICEEEKRENEDEEEQEDDEQSEMKRGLWSKIKEVGKEAAKAAAKAAGKAALGAVSEAVGEQ.

The first 22 residues, 1 to 22, serve as a signal peptide directing secretion; the sequence is MAFLKKSLFLVLFLGLVSLSIC. The propeptide occupies 23-43; that stretch reads EEEKRENEDEEEQEDDEQSEM. Residues 24 to 46 form a disordered region; that stretch reads EEKRENEDEEEQEDDEQSEMKRG. Over residues 30-40 the composition is skewed to acidic residues; the sequence is EDEEEQEDDEQ. The tract at residues 54 to 55 is hinge region that separates the two alpha-helices that constitute the peptide; it reads VG. Val78 is modified (valine amide). The propeptide occupies 80–81; that stretch reads EQ.

Post-translationally, amidation permits an increased antimicrobial activity against some microorganisms such as T.album and S.cerevisiae. In terms of processing, may contain a D-amino acid residue, since the natural peptide is not identical in chromatographic properties to the synthetic peptide. As to expression, expressed by the skin glands.

It localises to the secreted. It is found in the target cell membrane. Functionally, cationic amphipathic alpha-helical antimicrobial peptide with potent activity against Gram-negative and Gram-positive bacteria, fungi and protozoa. Acts in a synergistic effect in combination with Plasticin-B1 at doses that are not active alone. Acts by disturbing membrane functions. On model membranes, induces a strong perturbation of anionic lipid bilayers, resides at the hydrocarbon core-water interface, parallel to the plane of the membrane, and interacts preferentially with the polar head groups and glycerol backbone region of the anionic phospholipids, as well as the region of the lipid acyl chain near the bilayer surface. Induces a positive curvature of the bilayer and clustering of anionic lipids, consistent with a carpet mechanism, that may lead to the formation of mixed peptide-phospholipid toroidal, transient pores and membrane permeation/disruption once a threshold peptide accumulation is reached. Also enhances binding of agonists to adenosine A1 receptors (ADORA1), adenosine A2a receptors (ADORA2A), alpha-2 adrenergic receptors (ADRA2A) and 5-hydroxytryptamine 1A receptors (HTR1A). In addition, it enhances guanyl nucleotide exchange which may result in the conversion of receptors to a high affinity state complexed with guanyl nucleotide free G-protein. Affects human behavior eliciting profound malaise, followed by listlessness and then euphoria. Does not show cytotoxic activity on CHO cells. Does not act as a chemoattractant. Does not show hemolytic activity. The polypeptide is Dermaseptin-B2 (ADR) (Phyllomedusa bicolor (Two-colored leaf frog)).